Here is a 20-residue protein sequence, read N- to C-terminus: Agglutinin beta-2 chain isoform 1 (20 aa).

Residues 1–10 (TQSTGTSQTI) show a composition bias toward polar residues. Residues 1–20 (TQSTGTSQTIAVGLWGGPDN) are disordered.

The protein belongs to the jacalin lectin family. Tetramer of four alpha chains associated with two or four beta chains.

In terms of biological role, alpha-methyl-D-mannoside and D-mannose specific lectin. Binds IgA. This chain is Agglutinin beta-2 chain isoform 1, found in Morus nigra (Black mulberry).